Reading from the N-terminus, the 513-residue chain is 2,3-bisphosphoglycerate-independent phosphoglycerate mutase (513 aa).

Positions 13 and 63 each coordinate Mn(2+). The active-site Phosphoserine intermediate is Ser63. Residues His124, 154 to 155, Arg186, Arg192, 262 to 265, and Lys335 contribute to the substrate site; these read RD and RADR. The Mn(2+) site is built by Asp402, His406, Asp443, His444, and His462.

Belongs to the BPG-independent phosphoglycerate mutase family. As to quaternary structure, monomer. The cofactor is Mn(2+).

It catalyses the reaction (2R)-2-phosphoglycerate = (2R)-3-phosphoglycerate. The protein operates within carbohydrate degradation; glycolysis; pyruvate from D-glyceraldehyde 3-phosphate: step 3/5. Catalyzes the interconversion of 2-phosphoglycerate and 3-phosphoglycerate. This chain is 2,3-bisphosphoglycerate-independent phosphoglycerate mutase, found in Shewanella frigidimarina (strain NCIMB 400).